The following is a 72-amino-acid chain: Translation initiation factor IF-1 (72 aa).

An S1-like domain is found at Met1–Arg72.

It belongs to the IF-1 family. As to quaternary structure, component of the 30S ribosomal translation pre-initiation complex which assembles on the 30S ribosome in the order IF-2 and IF-3, IF-1 and N-formylmethionyl-tRNA(fMet); mRNA recruitment can occur at any time during PIC assembly.

The protein localises to the cytoplasm. Its function is as follows. One of the essential components for the initiation of protein synthesis. Stabilizes the binding of IF-2 and IF-3 on the 30S subunit to which N-formylmethionyl-tRNA(fMet) subsequently binds. Helps modulate mRNA selection, yielding the 30S pre-initiation complex (PIC). Upon addition of the 50S ribosomal subunit IF-1, IF-2 and IF-3 are released leaving the mature 70S translation initiation complex. The polypeptide is Translation initiation factor IF-1 (Chromohalobacter salexigens (strain ATCC BAA-138 / DSM 3043 / CIP 106854 / NCIMB 13768 / 1H11)).